Consider the following 364-residue polypeptide: MSIEIARIKKSFGRTQVLNDISLDIPSGQMVALLGPSGSGKTTLLRIIAGLEHQSSGHIRFHGTDVSRLHARERKVGFVFQHYALFRHMTVFDNIAFGLTVLPRRDRPTAAAIKTKVTQLLEMVQLAHLADRFPAQLSGGQKQRVALARALAVEPQILLLDEPFGALDAQVRKELRRWLRQLHEELKFTSVFVTHDQEEATEVADRVVVMSQGNIEQADAPDRVWREPATRFVLEFMGEVNRLTGTVRGGQFHVGAHRWPLGYTPAYQGPVDLFLRPWEVDISRRTSLDSPLPVQVIEASPKGHYTQLVVQPLGWYHDPLTVVMAGDDVPQRGERLFVGLQNARLYHGDQRIEPHEALALAESA.

Positions 3 to 237 constitute an ABC transporter domain; it reads IEIARIKKSF…PATRFVLEFM (235 aa). 35-42 is a binding site for ATP; sequence GPSGSGKT.

The protein belongs to the ABC transporter superfamily. Sulfate/tungstate importer (TC 3.A.1.6) family. The complex is composed of two ATP-binding proteins (CysA), two transmembrane proteins (CysT and CysW) and a solute-binding protein (CysP).

The protein localises to the cell inner membrane. The enzyme catalyses sulfate(out) + ATP + H2O = sulfate(in) + ADP + phosphate + H(+). The catalysed reaction is thiosulfate(out) + ATP + H2O = thiosulfate(in) + ADP + phosphate + H(+). Its function is as follows. Part of the ABC transporter complex CysAWTP involved in sulfate/thiosulfate import. Responsible for energy coupling to the transport system. The sequence is that of Sulfate/thiosulfate import ATP-binding protein CysA from Salmonella typhi.